Here is a 671-residue protein sequence, read N- to C-terminus: MESIEQQLTELRTTLRHHEYLYHVMDAPEIPDAEYDRLMRELRELETKHPELITPDSPTQRVGAAPLAAFSQIRHEVPMLSLDNVFDEESFLAFNKRVQDRLKSNEKVTWCCELKLDGLAVSILYENGVLVSAATRGDGTTGEDITSNVRTIRAIPLKLHGENIPARLEVRGEVFLPQAGFEKINEDARRTGGKVFANPRNAAAGSLRQLDPRITAKRPLTFFCYGVGVLEGGELPDTHLGRLLQFKKWGLPVSDRVTLCESAEEVLAFYHKVEEDRPTLGFDIDGVVIKVNSLEQQEQLGFVARAPRWAVAFKFPAQEQMTFVRDVEFQVGRTGAITPVARLEPVHVAGVLVSNATLHNADEIERLGLRIGDKVVIRRAGDVIPQVVNVVLSERPEDTREVVFPTYCPVCGSDVERVEGEAVARCTGGLICGAQRKESLKHFVSRRAMDVDGMGDKIIDQLVEKEYVHTPADLFKLTAGKLTGLERMGPKSAQNVVNALEKAKETTFARFLYALGIREVGEATAAGLAAYFGTLEALEAASIEELQKVPDVGIVVASHVHNFFAEESNRNVISELLAEGVHWPAPIVINAEEIDSPFAGKTVVLTGSLSQMSRDDAKARLVELGAKVAGSVSKKTDLVIAGEAAGSKLAKAQELGIEVIDEAEMLRLLGS.

NAD(+) contacts are provided by residues 32–36 (DAEYD), 81–82 (SL), and Glu113. Lys115 (N6-AMP-lysine intermediate) is an active-site residue. NAD(+)-binding residues include Arg136, Glu173, Lys290, and Lys314. The Zn(2+) site is built by Cys408, Cys411, Cys426, and Cys432. The BRCT domain maps to 593–671 (EIDSPFAGKT…EAEMLRLLGS (79 aa)).

The protein belongs to the NAD-dependent DNA ligase family. LigA subfamily. Mg(2+) is required as a cofactor. The cofactor is Mn(2+).

It carries out the reaction NAD(+) + (deoxyribonucleotide)n-3'-hydroxyl + 5'-phospho-(deoxyribonucleotide)m = (deoxyribonucleotide)n+m + AMP + beta-nicotinamide D-nucleotide.. In terms of biological role, DNA ligase that catalyzes the formation of phosphodiester linkages between 5'-phosphoryl and 3'-hydroxyl groups in double-stranded DNA using NAD as a coenzyme and as the energy source for the reaction. It is essential for DNA replication and repair of damaged DNA. In Escherichia coli O157:H7, this protein is DNA ligase.